We begin with the raw amino-acid sequence, 372 residues long: Citrate synthase 2 (372 aa).

The active site involves His-257. Ser-284 is modified (phosphoserine). The active site involves Asp-308.

Belongs to the citrate synthase family. Homodimer.

It catalyses the reaction oxaloacetate + acetyl-CoA + H2O = citrate + CoA + H(+). It participates in carbohydrate metabolism; tricarboxylic acid cycle; isocitrate from oxaloacetate: step 1/2. In terms of biological role, might regulate the synthesis and function of enzymes involved in later enzymatic steps of Krebs cycle. Loss in activity results in sporulation defect. This chain is Citrate synthase 2 (citZ), found in Bacillus subtilis (strain 168).